The chain runs to 460 residues: ATP synthase subunit beta (460 aa).

Residue 150–157 (GGAGVGKT) participates in ATP binding.

The protein belongs to the ATPase alpha/beta chains family. As to quaternary structure, F-type ATPases have 2 components, CF(1) - the catalytic core - and CF(0) - the membrane proton channel. CF(1) has five subunits: alpha(3), beta(3), gamma(1), delta(1), epsilon(1). CF(0) has three main subunits: a(1), b(2) and c(9-12). The alpha and beta chains form an alternating ring which encloses part of the gamma chain. CF(1) is attached to CF(0) by a central stalk formed by the gamma and epsilon chains, while a peripheral stalk is formed by the delta and b chains.

It localises to the cell inner membrane. It catalyses the reaction ATP + H2O + 4 H(+)(in) = ADP + phosphate + 5 H(+)(out). Produces ATP from ADP in the presence of a proton gradient across the membrane. The catalytic sites are hosted primarily by the beta subunits. In Klebsiella pneumoniae subsp. pneumoniae (strain ATCC 700721 / MGH 78578), this protein is ATP synthase subunit beta.